The sequence spans 1025 residues: Multidrug resistance protein MdtC (1025 aa).

12 helical membrane-spanning segments follow: residues isoleucine 15 to alanine 35, glutamate 333 to leucine 353, leucine 360 to cysteine 380, leucine 387 to leucine 407, valine 431 to leucine 451, valine 469 to leucine 489, leucine 528 to proline 548, alanine 851 to tyrosine 871, valine 875 to leucine 895, isoleucine 897 to valine 917, proline 953 to glycine 973, and isoleucine 984 to valine 1004.

Belongs to the resistance-nodulation-cell division (RND) (TC 2.A.6) family. MdtC subfamily. In terms of assembly, part of a tripartite efflux system composed of MdtA, MdtB and MdtC. MdtC forms a heteromultimer with MdtB.

It localises to the cell inner membrane. The polypeptide is Multidrug resistance protein MdtC (Klebsiella pneumoniae (strain 342)).